Consider the following 209-residue polypeptide: Large ribosomal subunit protein bL25 (209 aa).

The interval 190-209 is disordered; the sequence is PDASAAPVAAPAAPAKKGKK.

This sequence belongs to the bacterial ribosomal protein bL25 family. CTC subfamily. Part of the 50S ribosomal subunit; part of the 5S rRNA/L5/L18/L25 subcomplex. Contacts the 5S rRNA. Binds to the 5S rRNA independently of L5 and L18.

In terms of biological role, this is one of the proteins that binds to the 5S RNA in the ribosome where it forms part of the central protuberance. The polypeptide is Large ribosomal subunit protein bL25 (Delftia acidovorans (strain DSM 14801 / SPH-1)).